Reading from the N-terminus, the 205-residue chain is High frequency lysogenization protein HflD homolog (205 aa).

It belongs to the HflD family.

Its subcellular location is the cytoplasm. The protein localises to the cell inner membrane. The polypeptide is High frequency lysogenization protein HflD homolog (Photobacterium profundum (strain SS9)).